The primary structure comprises 275 residues: Large ribosomal subunit protein uL2 (275 aa).

Polar residues predominate over residues 38-53; sequence NSKAGRNNNGRITTRH. Disordered stretches follow at residues 38 to 59 and 224 to 257; these read NSKA…GGHK and AMNP…KGFR.

The protein belongs to the universal ribosomal protein uL2 family. In terms of assembly, part of the 50S ribosomal subunit. Forms a bridge to the 30S subunit in the 70S ribosome.

In terms of biological role, one of the primary rRNA binding proteins. Required for association of the 30S and 50S subunits to form the 70S ribosome, for tRNA binding and peptide bond formation. It has been suggested to have peptidyltransferase activity; this is somewhat controversial. Makes several contacts with the 16S rRNA in the 70S ribosome. This is Large ribosomal subunit protein uL2 from Burkholderia thailandensis (strain ATCC 700388 / DSM 13276 / CCUG 48851 / CIP 106301 / E264).